A 1043-amino-acid chain; its full sequence is Constitutive coactivator of PPAR-gamma-like protein 1 homolog (1043 aa).

Disordered stretches follow at residues 353-497 (SMVP…HMQI) and 929-1043 (YGRG…NKEE). Composition is skewed to polar residues over residues 362–375 (QMLN…QSRP) and 405–419 (SPIN…NHVD). 2 stretches are compositionally biased toward basic and acidic residues: residues 451–471 (TWDK…EQAK) and 951–964 (EVAK…EDSK). Positions 801–1043 (VELATKVEKM…LEGAVANKEE (243 aa)) are RNA binding. The segment covering 995 to 1010 (EARASSNSESALSSDS) has biased composition (low complexity).

It belongs to the constitutive coactivator of PPAR-gamma family.

The protein resides in the cytoplasm. It is found in the cell membrane. May bee involved in the oxidative stress-induced survival signaling. Binds RNA. May participate in mRNA transport in the cytoplasm. This is Constitutive coactivator of PPAR-gamma-like protein 1 homolog (fam120a) from Xenopus tropicalis (Western clawed frog).